The primary structure comprises 90 residues: Small ribosomal subunit protein uS15 (90 aa).

The protein belongs to the universal ribosomal protein uS15 family. In terms of assembly, part of the 30S ribosomal subunit. Forms a bridge to the 50S subunit in the 70S ribosome, contacting the 23S rRNA.

One of the primary rRNA binding proteins, it binds directly to 16S rRNA where it helps nucleate assembly of the platform of the 30S subunit by binding and bridging several RNA helices of the 16S rRNA. Its function is as follows. Forms an intersubunit bridge (bridge B4) with the 23S rRNA of the 50S subunit in the ribosome. This Aliarcobacter butzleri (strain RM4018) (Arcobacter butzleri) protein is Small ribosomal subunit protein uS15.